The chain runs to 107 residues: U1-lycotoxin-Ls1b (107 aa).

The first 20 residues, 1 to 20, serve as a signal peptide directing secretion; the sequence is MMKVLVVVALLVTLISYSSS. Positions 21-41 are excised as a propeptide; sequence EGIDDLEADELSSLMANEQTR. Cystine bridges form between Cys44-Cys59, Cys51-Cys68, Cys58-Cys86, and Cys70-Cys84.

Belongs to the neurotoxin 19 (CSTX) family. 04 (U1-Lctx) subfamily. Expressed by the venom gland.

The protein localises to the secreted. This Lycosa singoriensis (Wolf spider) protein is U1-lycotoxin-Ls1b.